The following is a 189-amino-acid chain: Interferon alpha-1/13 (189 aa).

The N-terminal stretch at 1 to 23 (MASPFALLMVLVVLSCKSSCSLG) is a signal peptide. Disulfide bonds link Cys-24-Cys-122 and Cys-52-Cys-162.

Belongs to the alpha/beta interferon family. Interacts with CR2.

Its subcellular location is the secreted. Produced by macrophages, IFN-alpha have antiviral activities. Interferon stimulates the production of two enzymes: a protein kinase and an oligoadenylate synthetase. In Homo sapiens (Human), this protein is Interferon alpha-1/13 (IFNA1).